We begin with the raw amino-acid sequence, 417 residues long: Glutamyl-tRNA reductase (417 aa).

Residues threonine 49–arginine 52, serine 105, glutamate 110–glutamine 112, and glutamine 116 each bind substrate. Cysteine 50 serves as the catalytic Nucleophile. Glycine 185–isoleucine 190 contributes to the NADP(+) binding site.

Belongs to the glutamyl-tRNA reductase family. As to quaternary structure, homodimer.

The catalysed reaction is (S)-4-amino-5-oxopentanoate + tRNA(Glu) + NADP(+) = L-glutamyl-tRNA(Glu) + NADPH + H(+). The protein operates within porphyrin-containing compound metabolism; protoporphyrin-IX biosynthesis; 5-aminolevulinate from L-glutamyl-tRNA(Glu): step 1/2. Catalyzes the NADPH-dependent reduction of glutamyl-tRNA(Glu) to glutamate 1-semialdehyde (GSA). The polypeptide is Glutamyl-tRNA reductase (Azoarcus sp. (strain BH72)).